The chain runs to 482 residues: Glutamate synthase [NADPH] small chain (482 aa).

The region spanning 39 to 72 is the 4Fe-4S ferredoxin-type domain; that stretch reads ERANEQANRCSQCGVPFCQVHCPVSNNIPDWLKL. [4Fe-4S] cluster is bound by residues Cys-95, Cys-99, Cys-105, and Cys-109.

As to quaternary structure, aggregate of 4 catalytic active heterodimers, consisting of a large and a small subunit. The cofactor is [4Fe-4S] cluster.

The enzyme catalyses 2 L-glutamate + NADP(+) = L-glutamine + 2-oxoglutarate + NADPH + H(+). The protein operates within amino-acid biosynthesis; L-glutamate biosynthesis via GLT pathway; L-glutamate from 2-oxoglutarate and L-glutamine (NADP(+) route): step 1/1. It participates in energy metabolism; nitrogen metabolism. This Azospirillum brasilense protein is Glutamate synthase [NADPH] small chain (gltD).